A 98-amino-acid chain; its full sequence is C-X-C motif chemokine 10 (98 aa).

Residues 1-21 (MNPSAAVVLCLVLLSLSGTQG) form the signal peptide. The residue at position 26 (R26) is a Citrulline. Cystine bridges form between C30-C57 and C32-C74.

It belongs to the intercrine alpha (chemokine CxC) family. In terms of assembly, monomer, dimer, and tetramer. Interacts with CXCR3 (via N-terminus). In the central nervous system, CXCL10 is predominantly localized to activated neurons. Expressed in both microglia and astrocytes.

The protein localises to the secreted. Its function is as follows. Pro-inflammatory cytokine that is involved in a wide variety of processes such as chemotaxis, differentiation, and activation of peripheral immune cells, regulation of cell growth, apoptosis and modulation of angiostatic effects. Plays thereby an important role during viral infections by stimulating the activation and migration of immune cells to the infected sites. Mechanistically, binding of CXCL10 to the CXCR3 receptor activates G protein-mediated signaling and results in downstream activation of phospholipase C-dependent pathway, an increase in intracellular calcium production and actin reorganization. In turn, recruitment of activated Th1 lymphocytes occurs at sites of inflammation. Activation of the CXCL10/CXCR3 axis also plays an important role in neurons in response to brain injury for activating microglia, the resident macrophage population of the central nervous system, and directing them to the lesion site. This recruitment is an essential element for neuronal reorganization. This Rattus norvegicus (Rat) protein is C-X-C motif chemokine 10 (Cxcl10).